Consider the following 475-residue polypeptide: Equilibrative nucleoside transporter 3 (475 aa).

Over 1-51 (MAFASEDIAYHSSNAVYRVPSNRHEADQEALLGKPLDYPAPGLQRPEDRFN) the chain is Cytoplasmic. Ser-21 carries the post-translational modification Phosphoserine. Positions 31–32 (LL) match the Dileucine internalization motif motif. A helical transmembrane segment spans residues 52–72 (GAYIIFFCLGIGGLLPWNFFV). At 73–105 (TAKEYWAFKLRNCSSPASGKDPEDADILNYFES) the chain is on the extracellular side. An N-linked (GlcNAc...) asparagine glycan is attached at Asn-84. The chain crosses the membrane as a helical span at residues 106 to 126 (YLAVASTVPSLLFLVANFLLV). The Cytoplasmic portion of the chain corresponds to 127–132 (NRIRVH). A helical transmembrane segment spans residues 133-153 (VRVLASLSVSLAIFVVMAVLV). Over 154–162 (RVDTSSWTR) the chain is Extracellular. The helical transmembrane segment at 163–183 (GFFSIAMACMAIISSSSTIFN) threads the bilayer. At 184 to 199 (SSVYGLTGSFPMRNAQ) the chain is on the cytoplasmic side. A helical transmembrane segment spans residues 200–220 (ALISGGAMGGTVSAVASLVDL). The Extracellular segment spans residues 221–230 (AASSDVRDSA). The chain crosses the membrane as a helical span at residues 231-251 (LAFFLTAAVFLGLCVGLYLLL). Residues 252–305 (PQLEYARYYMRPVVPIHVFSSEDSPPRDAPSTSSVAPASRAVHTPPLGPILKKT) lie on the Cytoplasmic side of the membrane. Residues 272 to 291 (SEDSPPRDAPSTSSVAPASR) are disordered. Residues 306-326 (AGLGFCAVFLYFITALIFPAI) traverse the membrane as a helical segment. Residues 327 to 340 (STNIQPMHKGTGSP) lie on the Extracellular side of the membrane. Residues 341-361 (WTSKFYVPLTVFLLFNFADLC) traverse the membrane as a helical segment. The Cytoplasmic segment spans residues 362–377 (GRQVTAWIQVPGPRSK). A helical transmembrane segment spans residues 378 to 398 (LLPILAVSRVCLVPLFLLCNY). The Extracellular segment spans residues 399–414 (QPRSHLTLVLFQSDIY). Residues 415-437 (PILFTCLLGLSNGYLSTLVLMYG) form a helical membrane-spanning segment. Residues 438 to 450 (PKIVPRELAEATS) lie on the Cytoplasmic side of the membrane. A helical membrane pass occupies residues 451-471 (VVMLFYMSLGLMLGSACAALL). Residues 472–475 (EHFI) are Extracellular-facing.

It belongs to the SLC29A/ENT transporter (TC 2.A.57) family. As to expression, widely expressed. Highest levels in heart and liver (at protein level).

It localises to the lysosome membrane. Its subcellular location is the late endosome membrane. The protein localises to the mitochondrion membrane. The protein resides in the cell membrane. The catalysed reaction is adenosine(in) = adenosine(out). It catalyses the reaction guanosine(in) = guanosine(out). The enzyme catalyses inosine(in) = inosine(out). It carries out the reaction uridine(out) = uridine(in). The catalysed reaction is cytidine(in) = cytidine(out). It catalyses the reaction thymidine(in) = thymidine(out). The enzyme catalyses 2'-deoxyadenosine(in) = 2'-deoxyadenosine(out). It carries out the reaction 2'-deoxycytidine(in) = 2'-deoxycytidine(out). The catalysed reaction is guanine(out) = guanine(in). It catalyses the reaction uracil(in) = uracil(out). The enzyme catalyses (R)-noradrenaline(out) = (R)-noradrenaline(in). It carries out the reaction dopamine(out) = dopamine(in). The catalysed reaction is serotonin(out) = serotonin(in). It catalyses the reaction tyramine(in) = tyramine(out). The enzyme catalyses ATP(in) = ATP(out). In terms of biological role, uniporter that mediates the facilitative transport of nucleoside across lysosomal and mitochondrial membranes. Functions as a non-electrogenic Na(+)-independent transporter. Substrate transport is pH-dependent and enhanced under acidic condition, probably reflecting the location of the transporter in acidic intracellular compartments. Proton is not a cotransporting ion but most likely change the ionization state of the transporter which dictates transport-permissible/impermissible conformation for nucleoside translocation. May direct the nucleoside transport from lysosomes to cytosol or cytosol to mitochondria to facilitate the fundamental function of salvage synthesis of nucleic acids. Involved in the transport of nucleosides (adenosine, guanosine, uridine, thymidine, cytidine and inosine) and deoxynucleosides (deoxyadenosine, deoxycytidine). Also mediates transport of purine nucleobases (adenine, guanine) and pyrimidine nucleobases (uracil). Also able to transport monoamine neurotransmitters dopamine, serotonin, noradrenaline and tyramine. Capable of transporting ATP. Mediates nucleoside export from lysosomes in macrophages, which regulates macrophage functions and numbers. This is Equilibrative nucleoside transporter 3 from Rattus norvegicus (Rat).